The sequence spans 668 residues: MLMWPQPHLPTHPHLPTHPHLPTHPHLPTHPHLPTHPHLPTHPHLPTHPMMSKETRQSKLAEAKEQLTDHHPQTNPSVGTAASDTKKKKINNGTNPETTTSGGCHSPEDEQKASHQHQEALRRELEAQVHTIRILTCQKTELQMALYYSQHAVKQLEGEARDLISRLHDSWKFAGELEQALSAVATQKKKADRYIEELTKERDALSLELYRNTITDEELKEKNAKLQEKLQLVESEKSEIQLNVKELKRKLERAKLLLPQQQLQAEADHLGKELQSVSAKLQAQVEENELWNRLNQQQEEKMWRQEEKIQEWEEKIQEQEEKIREQEEKIREQEEKMRRQEEMMWEKEEKMRRQEEMMWEKEEKMRRLEEMMWEKEEKIRELEEKMHEQEKIREQEEKRQEEEKIREQEKRQEQEAKMWRQEEKIREQEEKIREQEKKMWRQEEKIHEQEKIREEEKRQEQEEMWRQEEKIREQEEIWRQKEKMHEQEKIRKQEEKVWRQEEKMHDQEEKIREQEEKMWRQEEKIREQEEKIREQEEKIREQEEMMQEQEEKMGEQEEKMQEQEKMRRQEEKIREQEEKIREQKEKIREQEEKIWEQEEKIREQEEMMQEQEEKMWEQEEKMCEQEEKMQEQEEKMRRQEEKMWEQEVRLRQQEEKMQEHQEHLEAAI.

Disordered stretches follow at residues 1 to 120 (MLMW…HQEA), 323 to 356 (IREQ…RQEE), 384 to 466 (EKMH…EMWR), 481 to 591 (KEKM…REQE), and 603 to 639 (EQEE…MRRQ). Residues 15 to 41 (LPTHPHLPTHPHLPTHPHLPTHPHLPT) are compositionally biased toward basic residues. A compositionally biased stretch (basic and acidic residues) spans 51 to 72 (MSKETRQSKLAEAKEQLTDHHP). Polar residues-rich tracts occupy residues 73–83 (QTNPSVGTAAS) and 91–103 (NNGT…TSGG). Residues 106 to 120 (SPEDEQKASHQHQEA) show a composition bias toward basic and acidic residues. The stretch at 177 to 663 (LEQALSAVAT…EEKMQEHQEH (487 aa)) forms a coiled coil.

This sequence belongs to the GOLGA6 family.

The sequence is that of Golgin subfamily A member 6-like protein 1 (GOLGA6L1) from Homo sapiens (Human).